The sequence spans 285 residues: Undecaprenyl-diphosphatase (285 aa).

7 helical membrane passes run 12 to 34, 49 to 69, 93 to 113, 120 to 140, 159 to 179, 234 to 254, and 263 to 283; these read IVIAILQGATELFPVSSLGHAVI, IFLPFLVMLHLGTAIALLVYF, IHILALLVVATIPAVIIGGLL, LFGTARYAAIFLFLNGLLLLL, LTYADAAIIGLWQCLAFLPGI, VATIGAMVAAVTALASTAFLM, and WALSPFGYYCVLAGAVSFFIL.

Belongs to the UppP family.

The protein localises to the cell inner membrane. The catalysed reaction is di-trans,octa-cis-undecaprenyl diphosphate + H2O = di-trans,octa-cis-undecaprenyl phosphate + phosphate + H(+). Functionally, catalyzes the dephosphorylation of undecaprenyl diphosphate (UPP). Confers resistance to bacitracin. The polypeptide is Undecaprenyl-diphosphatase (Gluconacetobacter diazotrophicus (strain ATCC 49037 / DSM 5601 / CCUG 37298 / CIP 103539 / LMG 7603 / PAl5)).